The following is a 413-amino-acid chain: Serine/threonine transporter SstT (413 aa).

Transmembrane regions (helical) follow at residues I11–A31, F43–L63, I82–F102, A141–M161, I192–G212, L216–V236, M298–I318, A339–I359, and V363–T383.

The protein belongs to the dicarboxylate/amino acid:cation symporter (DAACS) (TC 2.A.23) family.

The protein localises to the cell inner membrane. The catalysed reaction is L-serine(in) + Na(+)(in) = L-serine(out) + Na(+)(out). It carries out the reaction L-threonine(in) + Na(+)(in) = L-threonine(out) + Na(+)(out). In terms of biological role, involved in the import of serine and threonine into the cell, with the concomitant import of sodium (symport system). The protein is Serine/threonine transporter SstT of Shewanella frigidimarina (strain NCIMB 400).